The primary structure comprises 100 residues: Small ribosomal subunit protein uS14c (100 aa).

This sequence belongs to the universal ribosomal protein uS14 family. Part of the 30S ribosomal subunit.

The protein localises to the plastid. Its subcellular location is the chloroplast. In terms of biological role, binds 16S rRNA, required for the assembly of 30S particles. The sequence is that of Small ribosomal subunit protein uS14c from Coffea arabica (Arabian coffee).